Consider the following 484-residue polypeptide: Acetyl-coenzyme A carboxylase carboxyl transferase subunit beta, chloroplastic (484 aa).

Residues 223–484 (LWIQCDNCYG…LHAFFPLNKN (262 aa)) form the CoA carboxyltransferase N-terminal domain. Cysteine 227, cysteine 230, cysteine 243, and cysteine 246 together coordinate Zn(2+). The segment at 227-246 (CDNCYGLMYKKVKMNVCEQC) adopts a C4-type zinc-finger fold.

Belongs to the AccD/PCCB family. In terms of assembly, acetyl-CoA carboxylase is a heterohexamer composed of biotin carboxyl carrier protein, biotin carboxylase and 2 subunits each of ACCase subunit alpha and ACCase plastid-coded subunit beta (accD). The cofactor is Zn(2+).

It is found in the plastid. The protein resides in the chloroplast stroma. The catalysed reaction is N(6)-carboxybiotinyl-L-lysyl-[protein] + acetyl-CoA = N(6)-biotinyl-L-lysyl-[protein] + malonyl-CoA. The protein operates within lipid metabolism; malonyl-CoA biosynthesis; malonyl-CoA from acetyl-CoA: step 1/1. Functionally, component of the acetyl coenzyme A carboxylase (ACC) complex. Biotin carboxylase (BC) catalyzes the carboxylation of biotin on its carrier protein (BCCP) and then the CO(2) group is transferred by the transcarboxylase to acetyl-CoA to form malonyl-CoA. The chain is Acetyl-coenzyme A carboxylase carboxyl transferase subunit beta, chloroplastic from Olimarabidopsis pumila (Dwarf rocket).